The sequence spans 315 residues: DNA-directed RNA polymerase subunit alpha (315 aa).

Positions 1–228 are alpha N-terminal domain (alpha-NTD); it reads MLEIEKPIIE…EHFKLFMSLT (228 aa). Positions 245 to 315 are alpha C-terminal domain (alpha-CTD); the sequence is KEKVLEMTVE…LGLALKLTEE (71 aa).

It belongs to the RNA polymerase alpha chain family. As to quaternary structure, homodimer. The RNAP catalytic core consists of 2 alpha, 1 beta, 1 beta' and 1 omega subunit. When a sigma factor is associated with the core the holoenzyme is formed, which can initiate transcription.

It catalyses the reaction RNA(n) + a ribonucleoside 5'-triphosphate = RNA(n+1) + diphosphate. Functionally, DNA-dependent RNA polymerase catalyzes the transcription of DNA into RNA using the four ribonucleoside triphosphates as substrates. The polypeptide is DNA-directed RNA polymerase subunit alpha (Clostridium beijerinckii (strain ATCC 51743 / NCIMB 8052) (Clostridium acetobutylicum)).